A 141-amino-acid chain; its full sequence is MAVQRTFSIIKPDAVAKNVIGEITTRFEKAGLKVVASKLKQLSKAEAEGFYAEHSARGFFGDLVAFMISGPVVVQVLEGENAIALNRELMGATNPKEAAAGTIRADFAESIDANAVHGSDSEAAAAREISYFFAATEVTAR.

Residues Lys-11, Phe-59, Arg-87, Thr-93, Arg-104, and Asn-114 each coordinate ATP. His-117 (pros-phosphohistidine intermediate) is an active-site residue.

This sequence belongs to the NDK family. Homotetramer. Mg(2+) is required as a cofactor.

It localises to the cytoplasm. The catalysed reaction is a 2'-deoxyribonucleoside 5'-diphosphate + ATP = a 2'-deoxyribonucleoside 5'-triphosphate + ADP. It carries out the reaction a ribonucleoside 5'-diphosphate + ATP = a ribonucleoside 5'-triphosphate + ADP. Its function is as follows. Major role in the synthesis of nucleoside triphosphates other than ATP. The ATP gamma phosphate is transferred to the NDP beta phosphate via a ping-pong mechanism, using a phosphorylated active-site intermediate. The protein is Nucleoside diphosphate kinase of Pseudomonas fluorescens (strain SBW25).